Consider the following 405-residue polypeptide: Acetate kinase (405 aa).

Asparagine 13 serves as a coordination point for Mg(2+). Position 20 (lysine 20) interacts with ATP. A substrate-binding site is contributed by arginine 94. Aspartate 153 serves as the catalytic Proton donor/acceptor. Residues 213-217 (HLGNG), 288-290 (DFR), and 336-340 (GIGEN) each bind ATP. Glutamate 390 is a binding site for Mg(2+).

It belongs to the acetokinase family. In terms of assembly, homodimer. Mg(2+) is required as a cofactor. The cofactor is Mn(2+).

The protein localises to the cytoplasm. The enzyme catalyses acetate + ATP = acetyl phosphate + ADP. It participates in metabolic intermediate biosynthesis; acetyl-CoA biosynthesis; acetyl-CoA from acetate: step 1/2. In terms of biological role, catalyzes the formation of acetyl phosphate from acetate and ATP. Can also catalyze the reverse reaction. The sequence is that of Acetate kinase from Buchnera aphidicola subsp. Acyrthosiphon pisum (strain APS) (Acyrthosiphon pisum symbiotic bacterium).